Reading from the N-terminus, the 155-residue chain is UBA-like domain-containing protein 1 (155 aa).

Positions 81 to 155 are disordered; sequence KASESFNSSS…KASAAMEAER (75 aa). Residues 83 to 96 are compositionally biased toward low complexity; the sequence is SESFNSSSSPSMAT. The segment covering 112–127 has biased composition (polar residues); the sequence is ANQQSLWTQGPSAQQT. A compositionally biased stretch (low complexity) spans 139–155; that stretch reads QQAASEQKASAAMEAER.

It belongs to the UBALD family.

The polypeptide is UBA-like domain-containing protein 1 (ubald1) (Danio rerio (Zebrafish)).